A 727-amino-acid polypeptide reads, in one-letter code: Beta-galactosidase 2 (727 aa).

Positions 1 to 27 are cleaved as a signal peptide; sequence MSMHFRNKAWIILAILCFSSLIHSTEA. Glutamate 185 acts as the Proton donor in catalysis. Residue glutamate 254 is the Nucleophile of the active site. N-linked (GlcNAc...) asparagine glycosylation is present at asparagine 255.

Belongs to the glycosyl hydrolase 35 family. Ubiquitous, with higher expression levels in roots and siliques.

The protein resides in the secreted. It is found in the extracellular space. The protein localises to the apoplast. It carries out the reaction Hydrolysis of terminal non-reducing beta-D-galactose residues in beta-D-galactosides.. This Arabidopsis thaliana (Mouse-ear cress) protein is Beta-galactosidase 2 (BGAL2).